The primary structure comprises 529 residues: Peptide chain release factor 3 (529 aa).

Residues 11-280 (AKRRTFAIIS…GLVEWAPAPM (270 aa)) enclose the tr-type G domain. GTP-binding positions include 20–27 (SHPDAGKT), 88–92 (DTPGH), and 142–145 (NKLD).

The protein belongs to the TRAFAC class translation factor GTPase superfamily. Classic translation factor GTPase family. PrfC subfamily.

It is found in the cytoplasm. In terms of biological role, increases the formation of ribosomal termination complexes and stimulates activities of RF-1 and RF-2. It binds guanine nucleotides and has strong preference for UGA stop codons. It may interact directly with the ribosome. The stimulation of RF-1 and RF-2 is significantly reduced by GTP and GDP, but not by GMP. The protein is Peptide chain release factor 3 of Shigella boydii serotype 18 (strain CDC 3083-94 / BS512).